The following is a 358-amino-acid chain: NAC domain-containing protein 12 (358 aa).

In terms of domain architecture, NAC spans 16–177; the sequence is VPPGFRFHPT…GWVVCRVFRK (162 aa). Residues 116-183 mediate DNA binding; the sequence is IGLRKTLVFY…VFRKKNYQKI (68 aa).

Stems and roots, specifically in interfascicular fibers (sclerenchyma), cells differentiating into vascular vessels (cambium), and xylem.

The protein localises to the nucleus. Functionally, transcriptional activator of genes involved in biosynthesis of secondary walls. Together with NST1, required for the secondary cell wall thickening and lignification of sclerenchymatous fibers and secondary xylem vessels (tracheary elements). Seems to repress the secondary cell wall thickening of xylary fibers. May also regulate the secondary cell wall lignification of other tissues. Binds to and activates the promoter of MYB46. This chain is NAC domain-containing protein 12, found in Arabidopsis thaliana (Mouse-ear cress).